Here is a 92-residue protein sequence, read N- to C-terminus: Small ribosomal subunit protein uS19 (92 aa).

Belongs to the universal ribosomal protein uS19 family.

Protein S19 forms a complex with S13 that binds strongly to the 16S ribosomal RNA. In Geobacillus stearothermophilus (Bacillus stearothermophilus), this protein is Small ribosomal subunit protein uS19 (rpsS).